The sequence spans 203 residues: Glycerol-3-phosphate acyltransferase (203 aa).

6 helical membrane passes run 5–25 (IASI…FSLL), 50–70 (TCGF…GALP), 72–92 (IAAQ…TAAM), 115–135 (VVLT…AVTF), 140–160 (ISAV…AVLL), and 162–182 (LGML…AIVF).

The protein belongs to the PlsY family. Probably interacts with PlsX.

The protein localises to the cell membrane. The enzyme catalyses an acyl phosphate + sn-glycerol 3-phosphate = a 1-acyl-sn-glycero-3-phosphate + phosphate. It participates in lipid metabolism; phospholipid metabolism. Catalyzes the transfer of an acyl group from acyl-phosphate (acyl-PO(4)) to glycerol-3-phosphate (G3P) to form lysophosphatidic acid (LPA). This enzyme utilizes acyl-phosphate as fatty acyl donor, but not acyl-CoA or acyl-ACP. The chain is Glycerol-3-phosphate acyltransferase from Roseiflexus sp. (strain RS-1).